Reading from the N-terminus, the 213-residue chain is Uridine kinase (213 aa).

15–22 lines the ATP pocket; that stretch reads GASASGKS.

It belongs to the uridine kinase family.

Its subcellular location is the cytoplasm. The catalysed reaction is uridine + ATP = UMP + ADP + H(+). It catalyses the reaction cytidine + ATP = CMP + ADP + H(+). It functions in the pathway pyrimidine metabolism; CTP biosynthesis via salvage pathway; CTP from cytidine: step 1/3. It participates in pyrimidine metabolism; UMP biosynthesis via salvage pathway; UMP from uridine: step 1/1. This Yersinia enterocolitica serotype O:8 / biotype 1B (strain NCTC 13174 / 8081) protein is Uridine kinase.